A 156-amino-acid chain; its full sequence is Small ribosomal subunit protein uS7 (156 aa).

It belongs to the universal ribosomal protein uS7 family. As to quaternary structure, part of the 30S ribosomal subunit. Contacts proteins S9 and S11.

Its function is as follows. One of the primary rRNA binding proteins, it binds directly to 16S rRNA where it nucleates assembly of the head domain of the 30S subunit. Is located at the subunit interface close to the decoding center, probably blocks exit of the E-site tRNA. The sequence is that of Small ribosomal subunit protein uS7 from Ruegeria pomeroyi (strain ATCC 700808 / DSM 15171 / DSS-3) (Silicibacter pomeroyi).